A 202-amino-acid chain; its full sequence is P25 protein (202 aa).

The Flavodoxin-like domain maps to 7-195; that stretch reads VAIVIYSTYG…EIARIQGETF (189 aa). Position 181 is a phosphoserine (Ser181).

The protein belongs to the WrbA family. Homodimer.

Functionally, unknown. Target of pap1 transcription factor. Confers brefeldin A resistance in S.pombe. In Schizosaccharomyces pombe (strain 972 / ATCC 24843) (Fission yeast), this protein is P25 protein (obr1).